An 854-amino-acid polypeptide reads, in one-letter code: MPIKESFKRIKSDHQNQNQDQINYVDENVKENLSTYYLVKRISFEYSFKEFLNSDQYLSIDTSIIFSKNIMNALYYLHSNNIIYADLKPSNILIDSKGIFKLNSINNSILIENNNNNNNNNNNNNNNNNNNNNNNQQIMITSRQQIFNLYNNNIDNDNNNNINESIYYLSPEVLKGYTYSFSSDIWSFGVLLFKCITGYYPFYSNDATKLIESIIYDNYLDPIIRLPSDNNDLIQQQHFNDLISKILEKNPQKRITWPKLFIHPFFKNQQTQQVNEIINKSSNTTLQLLNKSSSSSSSSSSSSSSSSSSSSSSSLSFQQQQQPNNISSPNLENQVIRLNKVKIPPLNISQTNSLNDFSNLIENNNFTRLISEFDHSIDFEASPIISPNRPSSPPLSSLSSCSSSSSSSVPIIFNKTIKDLQLLINNNNNNNNNNNNNNNNNNNNNNNNNYQEIIEYFNFISKFIKTKTTIITKLTLLNYLIDLLLLSNNQYSSIIEKLLIIINEHTILIKQLVQQIKISNDTIIKVKIIHLLGIIIGKSNNLSINSKDSIIQLLEYLNNEISSFNNNNNIQLSLKRKLVSTFGEILFYFSTLDEITLSTKWGILSLEKYINTLLNLFLINDSSSPSSSPPPSSSSSSSSPSSPSSTSPSLLSSIPNPSLFPQISLSSIITTNKAIDKTILLYLIKTFDNLLITRPIYIKYFSIKSKQLLNQFLKYIKDDNNLEDELNNNIKISSSSAFYRIIKQQPILSLSLIDNCNESVMINMIDLNQHWRVQISFLNILFILITINNNFIDDNNNINNINNNNNEFIKKFLEKLYNHYINQKNQINPIVFKKSFIFYSILKDFNNNNFIKIN.

Residues 1 to 266 (MPIKESFKRI…WPKLFIHPFF (266 aa)) enclose the Protein kinase domain. N-linked (GlcNAc...) asparagine glycans are attached at residues Asn-32 and Asn-106. A disordered region spans residues 116–135 (NNNNNNNNNNNNNNNNNNNN). Asn-163, Asn-279, Asn-283, and Asn-290 each carry an N-linked (GlcNAc...) asparagine glycan. The segment at 289-331 (LNKSSSSSSSSSSSSSSSSSSSSSSSLSFQQQQQPNNISSPNL) is disordered. A compositionally biased stretch (low complexity) spans 292–322 (SSSSSSSSSSSSSSSSSSSSSSSLSFQQQQQ). Asn-325, Asn-347, and Asn-365 each carry an N-linked (GlcNAc...) asparagine glycan. Positions 384–408 (IISPNRPSSPPLSSLSSCSSSSSSS) are disordered. Asn-414 carries an N-linked (GlcNAc...) asparagine glycan. The disordered stretch occupies residues 425 to 446 (NNNNNNNNNNNNNNNNNNNNNN). N-linked (GlcNAc...) asparagine glycosylation is found at Asn-520, Asn-541, and Asn-620. Residues 627-650 (SSPPPSSSSSSSSPSSPSSTSPSL) are disordered. Over residues 633–650 (SSSSSSSPSSPSSTSPSL) the composition is skewed to low complexity. N-linked (GlcNAc...) asparagine glycosylation occurs at Asn-757. Residues 770–792 (HWRVQISFLNILFILITINNNFI) traverse the membrane as a helical segment.

It belongs to the protein kinase superfamily. Ser/Thr protein kinase family.

Its subcellular location is the membrane. The sequence is that of Probable inactive serine/threonine-protein kinase DDB_G0274821 from Dictyostelium discoideum (Social amoeba).